A 1476-amino-acid chain; its full sequence is Membrane-associated guanylate kinase, WW and PDZ domain-containing protein 3 (1476 aa).

The PDZ 1 domain maps to 18-108; sequence CAVSWAGPPG…PIRLKTVKPG (91 aa). Residues 18-108 form an interaction with ADRB1 and TGFA region; the sequence is CAVSWAGPPG…PIRLKTVKPG (91 aa). One can recognise a Guanylate kinase-like domain in the interval 116-290; that stretch reads RHYLSLQFQK…SSMDFRNYMM (175 aa). Residue 123 to 130 coordinates ATP; the sequence is FQKGSIDH. A disordered region spans residues 184–266; the sequence is TYDGNFYGTP…ETREMHSETS (83 aa). Residues 193–204 show a composition bias toward pro residues; the sequence is PKPPAEPSPFQP. A Phosphoserine modification is found at S236. A compositionally biased stretch (acidic residues) spans 238–247; the sequence is LPEEEEDEDK. 2 consecutive WW domains span residues 296–329 and 342–375; these read EPLP…DPRL and GELP…NPVE. The PDZ 2 domain occupies 413-495; it reads RASLKKSTMG…NQYVNLTLCR (83 aa). The interaction with PTEN stretch occupies residues 413–495; it reads RASLKKSTMG…NQYVNLTLCR (83 aa). The interval 551 to 575 is disordered; it reads LASDRLNGPSESSEQRASLASSGSS. Residues 559–575 show a composition bias toward polar residues; it reads PSESSEQRASLASSGSS. The 77-residue stretch at 581–657 folds into the PDZ 3 domain; sequence TIPLIKGPKG…GADVPLLILR (77 aa). S598 is subject to Phosphoserine. Residues 664-691 form a disordered region; it reads TKTAKTKTDTKENSGSLETINEPIPQPM. The residue at position 702 (S702) is a Phosphoserine. Residues 729–811 form the PDZ 4 domain; the sequence is DVFLRKQESG…NGHVLLTVRR (83 aa). Residues 729-811 form an interaction with ADGRB1 region; the sequence is DVFLRKQESG…NGHVLLTVRR (83 aa). Residues 818–844 form a disordered region; the sequence is KQPEDESHQAFSQNGSPRLNRAELPTR. S833 and S916 each carry phosphoserine. In terms of domain architecture, PDZ 5 spans 852–939; that stretch reads DVTLQRKENE…TVTLTVVAEE (88 aa). Residues 852–939 are interaction with LPAR2 and GRIN2B; the sequence is DVTLQRKENE…TVTLTVVAEE (88 aa). The interval 939–966 is disordered; the sequence is EEHHGPPSGTNSARQSPALQHRPMGQAQ. Polar residues predominate over residues 946–956; sequence SGTNSARQSPA. Residues 1022 to 1104 enclose the PDZ 6 domain; sequence PVELERGPRG…KVLLLLRPGT (83 aa). Disordered stretches follow at residues 1109–1151 and 1168–1476; these read DHGD…ATED and TVQE…DKQL. Polar residues predominate over residues 1114 to 1123; sequence DTNSPSSSNV. Composition is skewed to basic and acidic residues over residues 1193–1211 and 1230–1265; these read SKKD…RLKG and RHSE…ESKG. The span at 1285–1304 shows a compositional bias: polar residues; it reads SSSPKKQQKIGGNSLSNTEG. Basic and acidic residues-rich tracts occupy residues 1317-1340 and 1350-1361; these read HPRD…KDLK and KSPEKKSSKVDE. S1321 is modified (phosphoserine). Over residues 1363–1373 the composition is skewed to polar residues; that stretch reads SLPSKKTSSTA. Residues 1419 to 1437 show a composition bias toward basic and acidic residues; it reads ADDHKGRESEVTDRCRERA.

The protein belongs to the MAGUK family. In terms of assembly, interacts with ADRB1, ADGRB1, LPAR2/EDG4, GRIN2B, PTEN, and PTPRB. Interacts with unidentified tyrosine phosphorylated proteins. Interacts with FZD4, FZD7, TGFA and VANGL2. Interacts with DLL1. Interacts with PRRG4 (via cytoplasmic domain). As to expression, widely expressed. Colocalizes with TGFA in neurons in the cortex and dentate gyrus, as well as in ependymal cells and some astrocytes (at protein level). Present in lens epithelium.

Its subcellular location is the cell membrane. The protein localises to the cell junction. The protein resides in the tight junction. It localises to the nucleus. Its function is as follows. Acts as a scaffolding protein at cell-cell junctions, thereby regulating various cellular and signaling processes. Cooperates with PTEN to modulate the kinase activity of AKT1. Its interaction with PTPRB and tyrosine phosphorylated proteins suggests that it may link receptor tyrosine phosphatase with its substrates at the plasma membrane. In polarized epithelial cells, involved in efficient trafficking of TGFA to the cell surface. Regulates the ability of LPAR2 to activate ERK and RhoA pathways. Regulates the JNK signaling cascade via its interaction with FZD4 and VANGL2. This is Membrane-associated guanylate kinase, WW and PDZ domain-containing protein 3 (Magi3) from Mus musculus (Mouse).